The following is a 375-amino-acid chain: Tyrosine--tRNA ligase (375 aa).

Positions 37, 168, 172, 175, and 190 each coordinate L-tyrosine. Positions 251–255 (KMSKS) match the 'KMSKS' region motif. Position 254 (Lys-254) interacts with ATP.

It belongs to the class-I aminoacyl-tRNA synthetase family. TyrS type 4 subfamily. As to quaternary structure, homodimer.

The protein resides in the cytoplasm. The catalysed reaction is tRNA(Tyr) + L-tyrosine + ATP = L-tyrosyl-tRNA(Tyr) + AMP + diphosphate + H(+). Its function is as follows. Catalyzes the attachment of tyrosine to tRNA(Tyr) in a two-step reaction: tyrosine is first activated by ATP to form Tyr-AMP and then transferred to the acceptor end of tRNA(Tyr). The polypeptide is Tyrosine--tRNA ligase (Thermococcus sibiricus (strain DSM 12597 / MM 739)).